A 98-amino-acid polypeptide reads, in one-letter code: Integration host factor subunit alpha (98 aa).

A disordered region spans residues 54–74 (LRDKSSRPGRNPKTGESVPVS).

This sequence belongs to the bacterial histone-like protein family. As to quaternary structure, heterodimer of an alpha and a beta chain.

In terms of biological role, this protein is one of the two subunits of integration host factor, a specific DNA-binding protein that functions in genetic recombination as well as in transcriptional and translational control. This is Integration host factor subunit alpha (ihfA) from Pasteurella multocida (strain Pm70).